The following is a 126-amino-acid chain: Aspartate 1-decarboxylase (126 aa).

Ser-25 serves as the catalytic Schiff-base intermediate with substrate; via pyruvic acid. Ser-25 is modified (pyruvic acid (Ser)). Position 57 (Thr-57) interacts with substrate. The active-site Proton donor is the Tyr-58. Residue 73 to 75 (GAA) coordinates substrate.

This sequence belongs to the PanD family. Heterooctamer of four alpha and four beta subunits. Pyruvate is required as a cofactor. Is synthesized initially as an inactive proenzyme, which is activated by self-cleavage at a specific serine bond to produce a beta-subunit with a hydroxyl group at its C-terminus and an alpha-subunit with a pyruvoyl group at its N-terminus.

Its subcellular location is the cytoplasm. The enzyme catalyses L-aspartate + H(+) = beta-alanine + CO2. The protein operates within cofactor biosynthesis; (R)-pantothenate biosynthesis; beta-alanine from L-aspartate: step 1/1. In terms of biological role, catalyzes the pyruvoyl-dependent decarboxylation of aspartate to produce beta-alanine. The chain is Aspartate 1-decarboxylase from Photorhabdus laumondii subsp. laumondii (strain DSM 15139 / CIP 105565 / TT01) (Photorhabdus luminescens subsp. laumondii).